The following is a 226-amino-acid chain: CRISPR-associated protein Cas5 (226 aa).

This sequence belongs to the CRISPR-associated protein Cas5 family. Subtype I-A/Apern subfamily. In terms of assembly, can form a Cascade complex with Csa5, Cas7, Cas3, Cas3' and Cas8a2.

Functionally, CRISPR (clustered regularly interspaced short palindromic repeat) is an adaptive immune system that provides protection against mobile genetic elements (viruses, transposable elements and conjugative plasmids). CRISPR clusters contain spacers, sequences complementary to antecedent mobile elements, and target invading nucleic acids. CRISPR clusters are transcribed and processed into CRISPR RNA (crRNA). In Thermoproteus tenax (strain ATCC 35583 / DSM 2078 / JCM 9277 / NBRC 100435 / Kra 1), this protein is CRISPR-associated protein Cas5 (cas5a).